The sequence spans 422 residues: uncharacterized protein (422 aa).

12 helical membrane passes run 23-43 (IVKI…LIYD), 47-67 (AIGT…LAPV), 90-110 (AIVL…WFVM), 112-132 (LMIV…ALIP), 151-171 (AQIV…FISP), 172-192 (SYTM…VLFI), 228-248 (ILYP…PWEA), 263-283 (IVYS…GFVL), 291-308 (YGLL…AFFI), 318-340 (VFFA…YTII), 352-372 (VYAV…VICG), and 381-401 (GKVI…ILLF).

It belongs to the major facilitator superfamily.

It localises to the cell membrane. This is an uncharacterized protein from Bacillus subtilis (strain 168).